Reading from the N-terminus, the 210-residue chain is Na(+)-translocating NADH-quinone reductase subunit D (210 aa).

6 helical membrane passes run 14–34 (PIVN…ALAV), 42–62 (LVMA…ISMI), 72–92 (IIVQ…LLQA), 103–123 (VFVG…AYAM), 131–151 (FMDG…VGFV), and 178–198 (NGLL…IWII).

It belongs to the NqrDE/RnfAE family. In terms of assembly, composed of six subunits; NqrA, NqrB, NqrC, NqrD, NqrE and NqrF.

Its subcellular location is the cell inner membrane. The catalysed reaction is a ubiquinone + n Na(+)(in) + NADH + H(+) = a ubiquinol + n Na(+)(out) + NAD(+). NQR complex catalyzes the reduction of ubiquinone-1 to ubiquinol by two successive reactions, coupled with the transport of Na(+) ions from the cytoplasm to the periplasm. NqrA to NqrE are probably involved in the second step, the conversion of ubisemiquinone to ubiquinol. This Shewanella sp. (strain ANA-3) protein is Na(+)-translocating NADH-quinone reductase subunit D.